The following is a 524-amino-acid chain: Bifunctional purine biosynthesis protein PurH (524 aa).

Positions 1–149 (MSDPLIKRAL…KNNESVTVLT (149 aa)) constitute an MGS-like domain.

This sequence belongs to the PurH family.

The catalysed reaction is (6R)-10-formyltetrahydrofolate + 5-amino-1-(5-phospho-beta-D-ribosyl)imidazole-4-carboxamide = 5-formamido-1-(5-phospho-D-ribosyl)imidazole-4-carboxamide + (6S)-5,6,7,8-tetrahydrofolate. It carries out the reaction IMP + H2O = 5-formamido-1-(5-phospho-D-ribosyl)imidazole-4-carboxamide. It participates in purine metabolism; IMP biosynthesis via de novo pathway; 5-formamido-1-(5-phospho-D-ribosyl)imidazole-4-carboxamide from 5-amino-1-(5-phospho-D-ribosyl)imidazole-4-carboxamide (10-formyl THF route): step 1/1. It functions in the pathway purine metabolism; IMP biosynthesis via de novo pathway; IMP from 5-formamido-1-(5-phospho-D-ribosyl)imidazole-4-carboxamide: step 1/1. This chain is Bifunctional purine biosynthesis protein PurH, found in Chlorobium phaeovibrioides (strain DSM 265 / 1930) (Prosthecochloris vibrioformis (strain DSM 265)).